We begin with the raw amino-acid sequence, 207 residues long: Ribosome maturation factor RimM (207 aa).

The region spanning 130–207 (EDEFYWVDLI…RIVVDWGLDY (78 aa)) is the PRC barrel domain.

The protein belongs to the RimM family. In terms of assembly, binds ribosomal protein uS19.

The protein localises to the cytoplasm. Its function is as follows. An accessory protein needed during the final step in the assembly of 30S ribosomal subunit, possibly for assembly of the head region. Essential for efficient processing of 16S rRNA. May be needed both before and after RbfA during the maturation of 16S rRNA. It has affinity for free ribosomal 30S subunits but not for 70S ribosomes. The chain is Ribosome maturation factor RimM from Cupriavidus taiwanensis (strain DSM 17343 / BCRC 17206 / CCUG 44338 / CIP 107171 / LMG 19424 / R1) (Ralstonia taiwanensis (strain LMG 19424)).